We begin with the raw amino-acid sequence, 294 residues long: Dolichol-phosphate mannosyltransferase (294 aa).

Residues 1–27 (MSIALDMDASAKMRKQPGSSGWSTSST) form a disordered region. Topologically, residues 1 to 263 (MSIALDMDAS…QQLVELYRFR (263 aa)) are cytoplasmic. A compositionally biased stretch (low complexity) spans 17-27 (PGSSGWSTSST). GDP-alpha-D-mannose contacts are provided by Pro35, Glu39, Val70, Asp72, Asp123, Ala124, Asp125, Gln127, Arg151, Lys211, Arg237, and Lys243. Residues Asp125 and Gln127 each coordinate Mg(2+). The Mn(2+) site is built by Asp125 and Gln127. Residues 264-284 (FGTVPIVFVLIVLLVLALYIW) form a helical membrane-spanning segment. Residues 285 to 294 (SHVLAPMLGA) lie on the Lumenal side of the membrane.

It belongs to the glycosyltransferase 2 family. It depends on Mg(2+) as a cofactor. Requires Mn(2+) as cofactor. Ca(2+) is required as a cofactor.

The protein resides in the endoplasmic reticulum membrane. The catalysed reaction is a di-trans,poly-cis-dolichyl phosphate + GDP-alpha-D-mannose = a di-trans,poly-cis-dolichyl beta-D-mannosyl phosphate + GDP. Its pathway is protein modification; protein glycosylation. In terms of biological role, transfers mannose from GDP-mannose to dolichol monophosphate to form dolichol phosphate mannose (Dol-P-Man) which is the mannosyl donor in pathways leading to N-glycosylation, glycosyl phosphatidylinositol membrane anchoring, and O-mannosylation of proteins. The chain is Dolichol-phosphate mannosyltransferase (DPM1) from Mycosarcoma maydis (Corn smut fungus).